The following is a 732-amino-acid chain: MDNPGPSLRGAFGILGALERDRLTHLKHKLGSLCSGSQESKLLHAMVLLALGQDTEARVSLESLKMNTVAQLVAHQWADMETTEGPEEPPDLSWTVARLYHLLAEENLCPASTRDMAYQVALRDFASQGDHQLGQLQNEAWDRCSSDIKGDPSGFQPLHSHQGSLQPPSASPAVTRSQPRPIDTPDWSWGHTLHSTNSTASLASHLEISQSPTLAFLSSHHGTHGPSKLCNTPLDTQEPQLVPEGCQEPEEISWPPSVETSVSLGLPHEISVPEVSPEEASPILPDALAAPDTSVHCPIECTELSTNSRSPLTSTTESVGKQWPITSQRSPQVPVGDDSLQNTTSSSPPAQPPSLQASPKLPPSPLSSASSPSSYPAPPTSTSPVLDHSETSDQKFYNFVVIHARADEQVALRIREKLETLGVPDGATFCEEFQVPGRGELHCLQDAIDHSGFTILLLTASFDCSLSLHQINHALMNSLTQSGRQDCVIPLLPLECSQAQLSPDTTRLLHSIVWLDEHSPIFARKVANTFKTQKLQAQRVRWKKAQEARTLKEQSIQLEAERQNVAAISAAYTAYVHSYRAWQAEMNKLGVAFGKNLSLGTPTPSWPGCPQPIPSHPQGGTPVFPYSPQPPSFPQPPCFPQPPSFPQPPSFPLPPVSSPQSQSFPSASSPAPQTPGPQPLIIHHAQMVQLGVNNHMWGHTGAQSSDDKTECSENPCMGPLTDQGEPLLETPE.

Positions 1-153 are TRIF-NTD; it reads MDNPGPSLRG…CSSDIKGDPS (153 aa). The TRAF6-binding motif lies at 84–91; sequence EGPEEPPD. The tract at residues 144–191 is disordered; that stretch reads CSSDIKGDPSGFQPLHSHQGSLQPPSASPAVTRSQPRPIDTPDWSWGH. The segment covering 159-178 has biased composition (polar residues); the sequence is HSHQGSLQPPSASPAVTRSQ. A pLxIS motif motif is present at residues 206–209; it reads LEIS. The residue at position 209 (Ser209) is a Phosphoserine. Lys228 is covalently cross-linked (Glycyl lysine isopeptide (Lys-Gly) (interchain with G-Cter in ubiquitin)). 2 consecutive short sequence motifs (TRAF6-binding) follow at residues 247–254 and 296–306; these read QEPEEISW and HCPIECTELST. The segment covering 305-331 has biased composition (polar residues); the sequence is STNSRSPLTSTTESVGKQWPITSQRSP. The tract at residues 305 to 389 is disordered; that stretch reads STNSRSPLTS…TSTSPVLDHS (85 aa). Residues 345–359 are compositionally biased toward low complexity; the sequence is SSSPPAQPPSLQASP. One can recognise a TIR domain in the interval 395-534; sequence KFYNFVVIHA…KVANTFKTQK (140 aa). A sufficient to induce apoptosis region spans residues 514-713; the sequence is WLDEHSPIFA…SSDDKTECSE (200 aa). Disordered stretches follow at residues 603–679 and 696–732; these read TPSW…GPQP and MWGH…ETPE. Pro residues-rich tracts occupy residues 604-615 and 625-657; these read PSWPGCPQPIPS and PYSP…PPVS. Residues 658-671 show a composition bias toward low complexity; sequence SPQSQSFPSASSPA.

Homodimer. Found in a multi-helicase-TICAM1 complex at least composed of DHX36, DDX1, DDX21 and TICAM1; this complex exists in resting cells with or without poly(I:C) RNA ligand stimulation. Interacts (via TIR domain) with DDX21 (via C-terminus). Interacts (via TIR domain) with DHX36 (via C-terminus). Interacts with AZI2 and IRF7. Interacts (when phosphorylated) with IRF3; following activation and phosphorylation on the pLxIS motif by TBK1, recruits IRF3. Interacts with TICAM2 in TLR4 recruitment. Interaction with PIAS4 inhibits the TICAM1-induced NF-kappa-B, IRF and IFNB1 activation. Interacts with IKBKB and IKBKE. Interaction with SARM1 blocks TICAM1-dependent transcription factor activation. Interacts with TRAF3. Interacts with TRAFD1. Interacts with UBQLN1 (via UBA domain). Interacts with TBK1, TRAF6 and RIPK1 and these interactions are enhanced in the presence of WDFY1. Interacts (via the TIR domain) with TLR3 in response to poly(I:C) and this interaction is enhanced in the presence of WDFY1. Interacts with TLR4 in response to poly(I:C) in a WDFY1-dependent manner. Interacts with WDFY1 in response to poly(I:C). Interacts with TRIM56. Interacts (via the TIR domain) with TLR5. Interacts with TRIM8. Interacts with TAX1BP1 and TRIM32; these interactions target TICAM1 to TAX1BP1-mediated selective autophagic degradation. Interacts with DDX50. In terms of processing, phosphorylated by TBK1. Following activation, phosphorylated by TBK1 at Ser-209 in the pLxIS motif. The phosphorylated pLxIS motif constitutes an IRF3-binding motif, leading to recruitment of the transcription factor IRF3 to induce type-I interferons and other cytokines. Polyubiquitinated at Lys-228 by TRIM38 with 'Lys-48'-linked chains, leading to proteasomal degradation. Polyubiquitinated with 'Lys-6'- and 'Lys-33'-linked chains in a TRIM8-dependent manner; ubiquitination disrupts the interaction with TBK1 and subsequent interferon production.

The protein resides in the cytoplasm. It is found in the cytosol. The protein localises to the cytoplasmic vesicle. Its subcellular location is the autophagosome. It localises to the mitochondrion. In terms of biological role, involved in innate immunity against invading pathogens. Adapter used by TLR3, TLR4 (through TICAM2) and TLR5 to mediate NF-kappa-B and interferon-regulatory factor (IRF) activation, and to induce apoptosis. Ligand binding to these receptors results in TRIF recruitment through its TIR domain. Distinct protein-interaction motifs allow recruitment of the effector proteins TBK1, TRAF6 and RIPK1, which in turn, lead to the activation of transcription factors IRF3 and IRF7, NF-kappa-B and FADD respectively. Phosphorylation by TBK1 on the pLxIS motif leads to recruitment and subsequent activation of the transcription factor IRF3 to induce expression of type I interferon and exert a potent immunity against invading pathogens. Component of a multi-helicase-TICAM1 complex that acts as a cytoplasmic sensor of viral double-stranded RNA (dsRNA) and plays a role in the activation of a cascade of antiviral responses including the induction of pro-inflammatory cytokines. This is TIR domain-containing adapter molecule 1 (Ticam1) from Mus musculus (Mouse).